Consider the following 1094-residue polypeptide: Probable arabinosyltransferase C (1094 aa).

13 helical membrane-spanning segments follow: residues 28 to 50 (IARY…TPLL), 232 to 251 (AAMI…LHIL), 264 to 286 (PARW…WWHF), 341 to 360 (SIWM…WVIS), 373 to 392 (TSRA…WLPL), 431 to 453 (IGAL…LVAI), 466 to 488 (RFGV…IPIF), 530 to 552 (SIAR…AMSL), 565 to 582 (SRRI…MMFT), 586 to 608 (WTHH…AVAV), 620 to 642 (TVFA…GWWY), 657 to 679 (WRWS…AAWF), and 700 to 722 (LAGI…EVVS). The span at 817-831 (GSEPGTEGGTTAAPG) shows a compositional bias: low complexity. The segment at 817-836 (GSEPGTEGGTTAAPGINGSR) is disordered.

This sequence belongs to the emb family.

Its subcellular location is the cell membrane. Arabinosyl transferase responsible for the polymerization of arabinose into the arabinan of arabinogalactan. The polypeptide is Probable arabinosyltransferase C (embC) (Mycobacterium tuberculosis (strain ATCC 25618 / H37Rv)).